Reading from the N-terminus, the 156-residue chain is Small ribosomal subunit protein uS7 (156 aa).

It belongs to the universal ribosomal protein uS7 family. Part of the 30S ribosomal subunit. Contacts proteins S9 and S11.

Its function is as follows. One of the primary rRNA binding proteins, it binds directly to 16S rRNA where it nucleates assembly of the head domain of the 30S subunit. Is located at the subunit interface close to the decoding center, probably blocks exit of the E-site tRNA. The chain is Small ribosomal subunit protein uS7 from Salinispora arenicola (strain CNS-205).